Reading from the N-terminus, the 435-residue chain is Serine--tRNA ligase (435 aa).

L-serine is bound at residue 242-244; sequence TAE. Residue 273 to 275 coordinates ATP; that stretch reads RSE. Residue Glu-296 coordinates L-serine. 360 to 363 provides a ligand contact to ATP; that stretch reads EISS. Ser-396 is an L-serine binding site.

It belongs to the class-II aminoacyl-tRNA synthetase family. Type-1 seryl-tRNA synthetase subfamily. As to quaternary structure, homodimer. The tRNA molecule binds across the dimer.

The protein resides in the cytoplasm. It catalyses the reaction tRNA(Ser) + L-serine + ATP = L-seryl-tRNA(Ser) + AMP + diphosphate + H(+). It carries out the reaction tRNA(Sec) + L-serine + ATP = L-seryl-tRNA(Sec) + AMP + diphosphate + H(+). The protein operates within aminoacyl-tRNA biosynthesis; selenocysteinyl-tRNA(Sec) biosynthesis; L-seryl-tRNA(Sec) from L-serine and tRNA(Sec): step 1/1. In terms of biological role, catalyzes the attachment of serine to tRNA(Ser). Is also able to aminoacylate tRNA(Sec) with serine, to form the misacylated tRNA L-seryl-tRNA(Sec), which will be further converted into selenocysteinyl-tRNA(Sec). This Vibrio vulnificus (strain YJ016) protein is Serine--tRNA ligase.